The primary structure comprises 233 residues: Nickel import system ATP-binding protein NikE (233 aa).

One can recognise an ABC transporter domain in the interval 2–228; the sequence is IELKHVTFGY…DRHPYTKELV (227 aa). Residue 35-42 coordinates ATP; that stretch reads GESGCGKS.

The protein belongs to the ABC transporter superfamily. As to quaternary structure, the complex is composed of two ATP-binding proteins (NikD and NikE), two transmembrane proteins (NikB and NikC) and a solute-binding protein (NikA).

The protein resides in the cell membrane. It catalyses the reaction Ni(2+)(out) + ATP + H2O = Ni(2+)(in) + ADP + phosphate + H(+). Part of the ABC transporter complex NikABCDE (Opp2) involved in nickel import. Probably responsible for energy coupling to the transport system. The polypeptide is Nickel import system ATP-binding protein NikE (Staphylococcus aureus (strain MSSA476)).